We begin with the raw amino-acid sequence, 180 residues long: Hypoxanthine-guanine phosphoribosyltransferase (180 aa).

Diphosphate is bound by residues K43 and G44. The Mg(2+) site is built by E99 and D100. D103 functions as the Proton acceptor in the catalytic mechanism. GMP contacts are provided by residues K131, 152 to 153 (FI), and D159. A diphosphate-binding site is contributed by R165.

It belongs to the purine/pyrimidine phosphoribosyltransferase family. Requires Mg(2+) as cofactor.

It is found in the cytoplasm. It carries out the reaction IMP + diphosphate = hypoxanthine + 5-phospho-alpha-D-ribose 1-diphosphate. The catalysed reaction is GMP + diphosphate = guanine + 5-phospho-alpha-D-ribose 1-diphosphate. It participates in purine metabolism; IMP biosynthesis via salvage pathway; IMP from hypoxanthine: step 1/1. It functions in the pathway purine metabolism; GMP biosynthesis via salvage pathway; GMP from guanine: step 1/1. Purine salvage pathway enzyme that catalyzes the transfer of the ribosyl-5-phosphate group from 5-phospho-alpha-D-ribose 1-diphosphate (PRPP) to the N9 position of the 6-oxopurines hypoxanthine and guanine to form the corresponding ribonucleotides IMP (inosine 5'-monophosphate) and GMP (guanosine 5'-monophosphate), with the release of PPi. This is Hypoxanthine-guanine phosphoribosyltransferase (hpt) from Streptococcus agalactiae serotype III (strain NEM316).